Reading from the N-terminus, the 580-residue chain is DNA mismatch repair protein MutL (580 aa).

The protein belongs to the DNA mismatch repair MutL/HexB family.

In terms of biological role, this protein is involved in the repair of mismatches in DNA. It is required for dam-dependent methyl-directed DNA mismatch repair. May act as a 'molecular matchmaker', a protein that promotes the formation of a stable complex between two or more DNA-binding proteins in an ATP-dependent manner without itself being part of a final effector complex. This chain is DNA mismatch repair protein MutL, found in Chlamydia caviae (strain ATCC VR-813 / DSM 19441 / 03DC25 / GPIC) (Chlamydophila caviae).